Consider the following 347-residue polypeptide: Phosphate acyltransferase (347 aa).

This sequence belongs to the PlsX family. As to quaternary structure, homodimer. Probably interacts with PlsY.

Its subcellular location is the cytoplasm. The enzyme catalyses a fatty acyl-[ACP] + phosphate = an acyl phosphate + holo-[ACP]. Its pathway is lipid metabolism; phospholipid metabolism. In terms of biological role, catalyzes the reversible formation of acyl-phosphate (acyl-PO(4)) from acyl-[acyl-carrier-protein] (acyl-ACP). This enzyme utilizes acyl-ACP as fatty acyl donor, but not acyl-CoA. The polypeptide is Phosphate acyltransferase (Rhizobium meliloti (strain 1021) (Ensifer meliloti)).